Reading from the N-terminus, the 103-residue chain is MIKSELVQIVAARNPHLYHRDVENIVNAVLDEITDALAAGNRVELRGFGAFSVKNRPSRSGRNPRTGDSVFVEEKWVPFFKTGKELRERLNPGMNDNNNGEDD.

This sequence belongs to the bacterial histone-like protein family. In terms of assembly, heterodimer of an alpha and a beta chain.

Functionally, this protein is one of the two subunits of integration host factor, a specific DNA-binding protein that functions in genetic recombination as well as in transcriptional and translational control. In Rhizobium meliloti (strain 1021) (Ensifer meliloti), this protein is Integration host factor subunit beta.